The primary structure comprises 254 residues: uncharacterized protein (254 aa).

Positions 163–182 (PNKHTQHKRSTRRTSPKDYN) are disordered. Positions 166–176 (HTQHKRSTRRT) are enriched in basic residues. A helical membrane pass occupies residues 207–227 (AHSAWILIIIIIIIVVILFFF).

It belongs to the RL11 family.

The protein resides in the host membrane. This is an uncharacterized protein from Human cytomegalovirus (strain Merlin) (HHV-5).